We begin with the raw amino-acid sequence, 235 residues long: Small ribosomal subunit protein uS2c (235 aa).

It belongs to the universal ribosomal protein uS2 family.

The protein resides in the plastid. It localises to the chloroplast. The chain is Small ribosomal subunit protein uS2c (rps2) from Guillardia theta (Cryptophyte).